The primary structure comprises 624 residues: Adenine deaminase 1 (624 aa).

It belongs to the metallo-dependent hydrolases superfamily. Adenine deaminase family. It depends on Mn(2+) as a cofactor.

It catalyses the reaction adenine + H2O + H(+) = hypoxanthine + NH4(+). This Bradyrhizobium sp. (strain ORS 278) protein is Adenine deaminase 1.